We begin with the raw amino-acid sequence, 354 residues long: Guanine nucleotide-binding protein G(i) subunit alpha-1 (354 aa).

Residue Gly2 is the site of N-myristoyl glycine attachment. Cys3 carries S-palmitoyl cysteine lipidation. In terms of domain architecture, G-alpha spans 32–354 (REVKLLLLGA…KNNLKDCGLF (323 aa)). The G1 motif stretch occupies residues 35–48 (KLLLLGAGESGKST). Residues 43–48 (ESGKST), 150–151 (DS), and 175–178 (LRTR) contribute to the GTP site. Ser47 is a Mg(2+) binding site. The tract at residues 173–181 (DVLRTRVKT) is G2 motif. Thr181 provides a ligand contact to Mg(2+). The interval 196–205 (FKMFDVGGQR) is G3 motif. GTP is bound by residues 200-204 (DVGGQ), 269-272 (NKKD), and Ala326. Residues 265-272 (ILFLNKKD) form a G4 motif region. Positions 324 to 329 (TCATDT) are G5 motif.

It belongs to the G-alpha family. G(i/o/t/z) subfamily. As to quaternary structure, heterotrimeric G proteins are composed of 3 units; alpha, beta and gamma. The alpha chain contains the guanine nucleotide binding site. Part of a spindle orientation complex at least composed of GNAI1, GPSM2 and NUMA1. Identified in complex with the beta subunit GNB1 and the gamma subunit GNG1. Identified in complex with the beta subunit GNB1 and the gamma subunit GNG2. Component of the TAS2R14-GNAI1 complex, consisting of TAS2R14, GNAI1, GNB1 and GNG2; within the complex interacts with TAS2R14; this complex plays a role in the perception of bitterness. GTP binding causes dissociation of the heterotrimer, liberating the individual subunits so that they can interact with downstream effector proteins. Interacts (GDP-bound form) with GPSM1; this inhibits guanine nucleotide exchange and GTP binding. Interacts (GDP-bound form) with GPSM2 (via GoLoco domains); this inhibits guanine nucleotide exchange. Interacts with RGS10; this strongly enhances GTP hydrolysis. Interacts with RGS1 and RGS16. Interacts with RGS4. Interacts with RGS12. Interacts (via active GTP- or inactive GDP-bound forms) with RGS14 (via RGS and GoLoco domains). Interacts with RGS3, RGS6, RGS7, RGS8, RGS17, RGS18 and RGS20 (in vitro). Interacts (GDP-bound form) with RIC8A (via C-terminus); promoting GNAI1 folding and association with the plasma membrane. Interacts (inactive GDP-bound form) with NUCB1 (via GBA motif); the interaction leads to activation of GNAI1. Interacts (inactive GDP-bound form) with CCDC88C/DAPLE (via GBA motif); the interaction leads to activation of GNAI1. Interacts (inactive GDP-bound form) with CCDC8A/GIV (via GBA motif). Interacts with GPR15. Post-translationally, myristoylation at Gly-2 is required for membrane anchoring before palmitoylation. Palmitoylation at Cys-3 varies with membrane lipid composition.

Its subcellular location is the nucleus. It is found in the cytoplasm. It localises to the cell membrane. The protein resides in the cytoskeleton. The protein localises to the microtubule organizing center. Its subcellular location is the centrosome. It is found in the cell cortex. It localises to the membrane. The catalysed reaction is GTP + H2O = GDP + phosphate + H(+). Guanine nucleotide-binding proteins (G proteins) function as transducers downstream of G protein-coupled receptors (GPCRs) in numerous signaling cascades. The alpha chain contains the guanine nucleotide binding site and alternates between an active, GTP-bound state and an inactive, GDP-bound state. Signaling by an activated GPCR promotes GDP release and GTP binding. The alpha subunit has a low GTPase activity that converts bound GTP to GDP, thereby terminating the signal. Both GDP release and GTP hydrolysis are modulated by numerous regulatory proteins. Signaling is mediated via effector proteins, such as adenylate cyclase. Inhibits adenylate cyclase activity of ADCY1, ADCY5 and ADCY6, leading to decreased intracellular cAMP levels. The inactive GDP-bound form prevents the association of RGS14 with centrosomes and is required for the translocation of RGS14 from the cytoplasm to the plasma membrane. Required for normal cytokinesis during mitosis. Required for cortical dynein-dynactin complex recruitment during metaphase. This is Guanine nucleotide-binding protein G(i) subunit alpha-1 (Gnai1) from Rattus norvegicus (Rat).